A 131-amino-acid polypeptide reads, in one-letter code: Fumarate reductase subunit C (131 aa).

Helical transmembrane passes span 30–50 (EGTAVPAVWFSIELIFGLFAL), 57–77 (WMGFVGFLQNPVVVILNLITL), and 109–129 (IIKGLWVVTAVVTVVILYVAL).

Belongs to the FrdC family. Part of an enzyme complex containing four subunits: a flavoprotein (FrdA), an iron-sulfur protein (FrdB), and two hydrophobic anchor proteins (FrdC and FrdD).

The protein resides in the cell inner membrane. Two distinct, membrane-bound, FAD-containing enzymes are responsible for the catalysis of fumarate and succinate interconversion; fumarate reductase is used in anaerobic growth, and succinate dehydrogenase is used in aerobic growth. Anchors the catalytic components of the fumarate reductase complex to the cell inner membrane, binds quinones. This Salmonella choleraesuis (strain SC-B67) protein is Fumarate reductase subunit C.